The primary structure comprises 420 residues: Glycogen synthase kinase-3 beta (420 aa).

Residues 1–22 (MSGRPRTTSFAESCKPVQQPSA) are compositionally biased toward polar residues. A disordered region spans residues 1-53 (MSGRPRTTSFAESCKPVQQPSAFGSMKVSRDKDGSKVTTVVATPGQGPDRPQE). Ser-9 bears the Phosphoserine; by PKB/AKT1, RPS6KA3 and SGK3 mark. A lipid anchor (S-palmitoyl cysteine) is attached at Cys-14. The region spanning 56–340 (YTDTKVIGNG…PLEACAHSFF (285 aa)) is the Protein kinase domain. ATP-binding positions include 62–70 (IGNGSFGVV) and Lys-85. The active-site Proton acceptor is the Asp-181. Residue Tyr-216 is modified to Phosphotyrosine. A compositionally biased stretch (low complexity) spans 386 to 401 (AAASTPTNATAASDAN). Residues 386-420 (AAASTPTNATAASDANTGDRGQTNNAASASASNST) form a disordered region. A Phosphoserine modification is found at Ser-389. Phosphothreonine occurs at positions 390 and 402. The segment covering 409–420 (NNAASASASNST) has biased composition (low complexity).

The protein belongs to the protein kinase superfamily. CMGC Ser/Thr protein kinase family. GSK-3 subfamily. Monomer. Interacts with ARRB2, DISC1 and ZBED3. Interacts with CABYR, MMP2, MUC1, NIN and PRUNE1. Interacts with AXIN1; the interaction mediates hyperphosphorylation of CTNNB1 leading to its ubiquitination and destruction. Interacts with and phosphorylates SNAI1. Interacts with DNM1L (via a C-terminal domain). Found in a complex composed of MACF1, APC, AXIN1, CTNNB1 and GSK3B. Interacts with SGK3. Interacts with DAB2IP (via C2 domain); the interaction stimulates GSK3B kinase activation. Interacts (via C2 domain) with PPP2CA. Interacts with the CLOCK-BMAL1 heterodimer. Interacts with the BMAL1. Interacts with CTNND2. Interacts with NCYM. The complex composed, at least, of APC, CTNNB1 and GSK3B interacts with JPT1; the interaction requires the inactive form of GSK3B (phosphorylated at 'Ser-9'). Forms a complex composed of PRKAR2A or PRKAR2B, GSK3B and GSKIP through GSKIP interaction; facilitates PKA-induced phosphorylation and regulates GSK3B activity. Interacts with GSKIP. Interacts with GID8. Interacts with PIWIL2. Interacts with LMBR1L. Interacts with DDX3X. Interacts with BIRC2. Interacts with TNFRSF10B; TNFRSF10B stimulation inhibits GSK3B kinase activity. Interacts with RICTOR; the interaction results in phosphorylation of RICTOR at 'Thr-1695' by GSK3B which facilitates FBXW7-mediated ubiquitination and subsequent degradation of RICTOR. Found in a complex with SLC39A6, SLC39A10 and with GSK3B that controls NCAM1 phosphorylation. Interacts with PKP3 (via ARM repeats); the interaction may be involved in PKP3 protein degradation. In terms of processing, phosphorylated by AKT1 and ILK1. Upon insulin-mediated signaling, the activated PKB/AKT1 protein kinase phosphorylates and deactivates GSK3B, resulting in the dephosphorylation and activation of GYS1. Activated by phosphorylation at Tyr-216. Inactivated by phosphorylation at Ser-9. Phosphorylated in a circadian manner in the hippocampus. Post-translationally, mono-ADP-ribosylation by PARP10 negatively regulates kinase activity. Palmitoylated. Palmitoylation by ZDHHC4 prevents AKT1-mediated phosphorylation. Expressed in testis, thymus, prostate and ovary and weakly expressed in lung, brain and kidney. Colocalizes with EIF2AK2/PKR and TAU in the Alzheimer disease (AD) brain.

The protein localises to the cytoplasm. It is found in the nucleus. The protein resides in the cell membrane. It carries out the reaction L-seryl-[tau protein] + ATP = O-phospho-L-seryl-[tau protein] + ADP + H(+). The catalysed reaction is L-threonyl-[tau protein] + ATP = O-phospho-L-threonyl-[tau protein] + ADP + H(+). It catalyses the reaction L-seryl-[protein] + ATP = O-phospho-L-seryl-[protein] + ADP + H(+). The enzyme catalyses L-threonyl-[protein] + ATP = O-phospho-L-threonyl-[protein] + ADP + H(+). With respect to regulation, activated by phosphorylation at Tyr-216. In response to insulin, inhibited by phosphorylation at Ser-9 by PKB/AKT1 and RPS6KA3; phosphorylation at this site causes a conformational change, preventing access of substrates to the active site. Inhibited by IL22 treatment which also triggers phosphorylation at Ser-9, promoting inactivation. Inhibited by lithium. In terms of biological role, constitutively active protein kinase that acts as a negative regulator in the hormonal control of glucose homeostasis, Wnt signaling and regulation of transcription factors and microtubules, by phosphorylating and inactivating glycogen synthase (GYS1 or GYS2), EIF2B, CTNNB1/beta-catenin, APC, AXIN1, DPYSL2/CRMP2, JUN, NFATC1/NFATC, MAPT/TAU and MACF1. Requires primed phosphorylation of the majority of its substrates. In skeletal muscle, contributes to insulin regulation of glycogen synthesis by phosphorylating and inhibiting GYS1 activity and hence glycogen synthesis. May also mediate the development of insulin resistance by regulating activation of transcription factors. Regulates protein synthesis by controlling the activity of initiation factor 2B (EIF2BE/EIF2B5) in the same manner as glycogen synthase. In Wnt signaling, GSK3B forms a multimeric complex with APC, AXIN1 and CTNNB1/beta-catenin and phosphorylates the N-terminus of CTNNB1 leading to its degradation mediated by ubiquitin/proteasomes. Phosphorylates JUN at sites proximal to its DNA-binding domain, thereby reducing its affinity for DNA. Phosphorylates NFATC1/NFATC on conserved serine residues promoting NFATC1/NFATC nuclear export, shutting off NFATC1/NFATC gene regulation, and thereby opposing the action of calcineurin. Phosphorylates MAPT/TAU on 'Thr-548', decreasing significantly MAPT/TAU ability to bind and stabilize microtubules. MAPT/TAU is the principal component of neurofibrillary tangles in Alzheimer disease. Plays an important role in ERBB2-dependent stabilization of microtubules at the cell cortex. Phosphorylates MACF1, inhibiting its binding to microtubules which is critical for its role in bulge stem cell migration and skin wound repair. Probably regulates NF-kappa-B (NFKB1) at the transcriptional level and is required for the NF-kappa-B-mediated anti-apoptotic response to TNF-alpha (TNF/TNFA). Negatively regulates replication in pancreatic beta-cells, resulting in apoptosis, loss of beta-cells and diabetes. Through phosphorylation of the anti-apoptotic protein MCL1, may control cell apoptosis in response to growth factors deprivation. Phosphorylates MUC1 in breast cancer cells, decreasing the interaction of MUC1 with CTNNB1/beta-catenin. Is necessary for the establishment of neuronal polarity and axon outgrowth. Phosphorylates MARK2, leading to inhibition of its activity. Phosphorylates SIK1 at 'Thr-182', leading to sustainment of its activity. Phosphorylates ZC3HAV1 which enhances its antiviral activity. Phosphorylates SNAI1, leading to its ubiquitination and proteasomal degradation. Phosphorylates SFPQ at 'Thr-687' upon T-cell activation. Phosphorylates NR1D1 st 'Ser-55' and 'Ser-59' and stabilizes it by protecting it from proteasomal degradation. Regulates the circadian clock via phosphorylation of the major clock components including BMAL1, CLOCK and PER2. Phosphorylates FBXL2 at 'Thr-404' and primes it for ubiquitination by the SCF(FBXO3) complex and proteasomal degradation. Phosphorylates CLOCK AT 'Ser-427' and targets it for proteasomal degradation. Phosphorylates BMAL1 at 'Ser-17' and 'Ser-21' and primes it for ubiquitination and proteasomal degradation. Phosphorylates OGT at 'Ser-3' or 'Ser-4' which positively regulates its activity. Phosphorylates MYCN in neuroblastoma cells which may promote its degradation. Regulates the circadian rhythmicity of hippocampal long-term potentiation and BMAL1 and PER2 expression. Acts as a regulator of autophagy by mediating phosphorylation of KAT5/TIP60 under starvation conditions, activating KAT5/TIP60 acetyltransferase activity and promoting acetylation of key autophagy regulators, such as ULK1 and RUBCNL/Pacer. Negatively regulates extrinsic apoptotic signaling pathway via death domain receptors. Promotes the formation of an anti-apoptotic complex, made of DDX3X, BRIC2 and GSK3B, at death receptors, including TNFRSF10B. The anti-apoptotic function is most effective with weak apoptotic signals and can be overcome by stronger stimulation. Phosphorylates E2F1, promoting the interaction between E2F1 and USP11, stabilizing E2F1 and promoting its activity. Phosphorylates mTORC2 complex component RICTOR at 'Ser-1235' in response to endoplasmic stress, inhibiting mTORC2. Phosphorylates mTORC2 complex component RICTOR at 'Thr-1695' which facilitates FBXW7-mediated ubiquitination and subsequent degradation of RICTOR. Phosphorylates FXR1, promoting FXR1 ubiquitination by the SCF(FBXO4) complex and FXR1 degradation by the proteasome. Phosphorylates interleukin-22 receptor subunit IL22RA1, preventing its proteasomal degradation. In Homo sapiens (Human), this protein is Glycogen synthase kinase-3 beta.